Reading from the N-terminus, the 620-residue chain is Sorbicillinoid biosynthetic cluster transcription factor 1 (620 aa).

Residues 10–37 (CEECRRRKARCDRVRPQCGICADAGRTC) constitute a DNA-binding region (zn(2)-C6 fungal-type). Positions 285-308 (HDDETSPNENSGSCPSVSPSTTQN) are disordered. The span at 291–308 (PNENSGSCPSVSPSTTQN) shows a compositional bias: polar residues.

It is found in the nucleus. Transcription factor that acts as the main regulator of the gene cluster that mediates the biosynthesis of sorbicillinoids, a diverse group of yellow secondary metabolites that restrict growth of competing pathogenic fungi but not of bacteria. This chain is Sorbicillinoid biosynthetic cluster transcription factor 1, found in Penicillium rubens (strain ATCC 28089 / DSM 1075 / NRRL 1951 / Wisconsin 54-1255) (Penicillium chrysogenum).